The chain runs to 758 residues: MTILNHTLGFPRIGLNRELKKAQEQYWSGELMIKDLLLVGSELRKKNWQKQKESGIDYIPVGDFAWYDHVLTTSMMLGNIPERHNNTVDSIDLDCLFRIARGCPPDISASEMTKWFNTNYHYIVPEFYKNKVLKYSWKQILDEVDEALLLGHKVKPILLGPITYLWLGKVKGEYFDRLDILKDIILIYKHVLKELSNRSIDFVQIDEPVLVLELPKKWKDAYHYAYKELSGITKLLLTTYFDSIEHNIEFIRDLPVQGIHIDLVHGKYNLKNFSSKIPSEWMLSLGVINGRNIWRSDLLKWFKSIKSISNHHRKILIGSSCSLLHTPIDLVAEKHLDKEVKRWFSFAVQKCEELRLLSSALNDNDIDSIKEWSLPIYERSVSKRVNKIEVENRLSNVLIDKHQRLSPYKTRSIEQNKKFNFPILPTTTIGSFPQTISIRKLRRDFKLGLVTEEEYTKIIKKNIKKVIKIQEELDIDVLVHGEAERNDMVEYFGEHLDGFAFTDNGWVQSYGSRCVKPPIIIGDISRPKPMTIEWSKYAQSLTKKPVKGMLTGPVTILLWSFPREDVSLKKIATQIALALYDEVLDLEKEKIEIIQIDEPALREGLPLRKSSWHEYLSWAVDVFRLSASGVKNTTQIHTHMCYCEFNDIMDSIALLDADVITIEAARSDMELLESFKKFKYPNEVGPGAYDIHSSNIPSVQSIISLLNKAMKYIPLKRIWVNPDCGLKTRNWNETILSLKNMVEATKILREKMKDSECD.

5-methyltetrahydropteroyltri-L-glutamate contacts are provided by residues 17–20 (RELK) and Lys-114. Residues 429–431 (IGS) and Glu-482 each bind L-homocysteine. Residues 429 to 431 (IGS) and Glu-482 each bind L-methionine. 5-methyltetrahydropteroyltri-L-glutamate contacts are provided by residues 513-514 (RC) and Trp-559. Asp-597 serves as a coordination point for L-homocysteine. Asp-597 is a binding site for L-methionine. Glu-603 contacts 5-methyltetrahydropteroyltri-L-glutamate. Zn(2+) contacts are provided by His-639, Cys-641, and Glu-663. The active-site Proton donor is the His-692. Cys-724 contributes to the Zn(2+) binding site.

The protein belongs to the vitamin-B12 independent methionine synthase family. The cofactor is Zn(2+).

The enzyme catalyses 5-methyltetrahydropteroyltri-L-glutamate + L-homocysteine = tetrahydropteroyltri-L-glutamate + L-methionine. It participates in amino-acid biosynthesis; L-methionine biosynthesis via de novo pathway; L-methionine from L-homocysteine (MetE route): step 1/1. Catalyzes the transfer of a methyl group from 5-methyltetrahydrofolate to homocysteine resulting in methionine formation. The polypeptide is 5-methyltetrahydropteroyltriglutamate--homocysteine methyltransferase (Buchnera aphidicola subsp. Acyrthosiphon pisum (strain APS) (Acyrthosiphon pisum symbiotic bacterium)).